Reading from the N-terminus, the 145-residue chain is Large ribosomal subunit protein uL15 (145 aa).

A disordered region spans residues I23–E51. The segment covering G32–R47 has biased composition (basic residues).

The protein belongs to the universal ribosomal protein uL15 family. Part of the 50S ribosomal subunit.

In terms of biological role, binds to the 23S rRNA. This chain is Large ribosomal subunit protein uL15, found in Buchnera aphidicola subsp. Cinara cedri (strain Cc).